Here is a 166-residue protein sequence, read N- to C-terminus: Ureidoglycolate lyase (166 aa).

The protein belongs to the ureidoglycolate lyase family. As to quaternary structure, homodimer. The cofactor is Ni(2+).

The catalysed reaction is (S)-ureidoglycolate = urea + glyoxylate. The protein operates within nitrogen metabolism; (S)-allantoin degradation. Functionally, catalyzes the catabolism of the allantoin degradation intermediate (S)-ureidoglycolate, generating urea and glyoxylate. Involved in the utilization of allantoin as nitrogen source. This Rhizobium leguminosarum bv. trifolii (strain WSM2304) protein is Ureidoglycolate lyase.